The sequence spans 267 residues: Probable ribosomal RNA small subunit methyltransferase A (267 aa).

S-adenosyl-L-methionine is bound by residues leucine 12, glycine 37, glutamate 58, aspartate 83, and asparagine 100.

Belongs to the class I-like SAM-binding methyltransferase superfamily. rRNA adenine N(6)-methyltransferase family. RsmA subfamily.

Its subcellular location is the cytoplasm. In terms of biological role, specifically dimethylates two adjacent adenosines in the loop of a conserved hairpin near the 3'-end of 16S rRNA in the 30S particle. May play a critical role in biogenesis of 30S subunits. This chain is Probable ribosomal RNA small subunit methyltransferase A, found in Methanococcus maripaludis (strain DSM 14266 / JCM 13030 / NBRC 101832 / S2 / LL).